Here is a 495-residue protein sequence, read N- to C-terminus: Keratin, type II cytoskeletal 74 (495 aa).

The segment at 1–105 (MASCHTAGHR…DPEIQKVRAQ (105 aa)) is head. The tract at residues 106 to 141 (EREQIKALNDKFASFIDKVRFLEQQNQVLQTKWELL) is coil 1A. The IF rod domain occupies 106 to 419 (EREQIKALND…KLLEGEENRM (314 aa)). The tract at residues 142–160 (QQLDLSNCRRNLEPVYEAH) is linker 1. A coil 1B region spans residues 161–252 (ISNLRKQLEM…CLYDEEISQL (92 aa)). The interval 253–276 (QTHASETSVILSMDNNRDLDLAGI) is linker 12. The tract at residues 277–415 (IAEVRAHYED…ATYRKLLEGE (139 aa)) is coil 2. The tail stretch occupies residues 416-495 (ENRMSGENPS…AAGTLARKTT (80 aa)). The interval 449-495 (DSEAGNAVGSPSTPRNSQSKTRGSSVDPRDAQDESAAAAGTLARKTT) is disordered. Residues 457–472 (GSPSTPRNSQSKTRGS) are compositionally biased toward polar residues.

The protein belongs to the intermediate filament family. As to quaternary structure, heterotetramer of two type I and two type II keratins. Expressed in epidermis with a particularly strong staining in the nail matrix, nail bed and hyponychium (at protein level).

Has a role in hair formation. Specific component of keratin intermediate filaments in the inner root sheath (IRS) of the hair follicle. This chain is Keratin, type II cytoskeletal 74, found in Mus musculus (Mouse).